The sequence spans 491 residues: NADH-quinone oxidoreductase subunit N 1 (491 aa).

14 helical membrane passes run 15–35, 41–61, 77–97, 105–125, 130–150, 165–185, 211–231, 247–269, 279–299, 307–327, 333–353, 378–398, 416–436, and 459–479; these read VLGM…VDMF, VLLT…ALDY, FGVL…LIAF, LSQG…LFLV, LVTI…LTGF, LLLG…IYGM, PILL…VSMF, PVTA…RFLN, WQLL…IVAV, MLAY…LAAS, AFTV…AVLI, LALA…TAGF, LAII…RVIV, and LGVI…NIFT.

This sequence belongs to the complex I subunit 2 family. In terms of assembly, NDH-1 is composed of 14 different subunits. Subunits NuoA, H, J, K, L, M, N constitute the membrane sector of the complex.

It localises to the cell membrane. It catalyses the reaction a quinone + NADH + 5 H(+)(in) = a quinol + NAD(+) + 4 H(+)(out). In terms of biological role, NDH-1 shuttles electrons from NADH, via FMN and iron-sulfur (Fe-S) centers, to quinones in the respiratory chain. The immediate electron acceptor for the enzyme in this species is believed to be ubiquinone. Couples the redox reaction to proton translocation (for every two electrons transferred, four hydrogen ions are translocated across the cytoplasmic membrane), and thus conserves the redox energy in a proton gradient. The polypeptide is NADH-quinone oxidoreductase subunit N 1 (Herpetosiphon aurantiacus (strain ATCC 23779 / DSM 785 / 114-95)).